Consider the following 780-residue polypeptide: WD repeat-containing protein 27 (780 aa).

WD repeat units lie at residues 3–56 (TPPE…VWSS), 61–100 (HQLLTLQGHHQLITAVVFGNQIDPLLLCSASEDYIIMWNV), 111–150 (LTPRGTILGSLLQTVLCLRFSLDDRAIAVCAGNKISVMDV), 154–193 (SVLVELKGHQGSVTAVEFCPWQAHTLISVSEDRSFKVWDF), 200–236 (YSSSILTAYPLLNLLINEENQQLVTGSADGQLWIFSL), 291–335 (FPIL…LASF), 342–385 (HFKE…VLEI), 500–540 (NLSR…VFNA), 544–582 (GPPAAFSGHDGAVSTICWSHDKRWLLSTGRDRTLRVWSV), 588–639 (MLLL…RYKP), 644–685 (KPIF…VFDL), 691–738 (AAVL…LWDL), and 752–779 (AFCTVLQDTQIRLLKWPSTQQLLSLSQP).

The protein is WD repeat-containing protein 27 (Wdr27) of Mus musculus (Mouse).